Consider the following 506-residue polypeptide: Maturase K (506 aa).

It belongs to the intron maturase 2 family. MatK subfamily.

It is found in the plastid. Its subcellular location is the chloroplast. Its function is as follows. Usually encoded in the trnK tRNA gene intron. Probably assists in splicing its own and other chloroplast group II introns. This Hydrangea macrophylla (Bigleaf hydrangea) protein is Maturase K.